We begin with the raw amino-acid sequence, 697 residues long: Disintegrin and metalloproteinase domain-containing protein 26A (697 aa).

The signal sequence occupies residues Met-1–Ala-22. The propeptide occupies Lys-23–Tyr-187. Asn-127 is a glycosylation site (N-linked (GlcNAc...) asparagine). A Cysteine switch motif is present at residues Met-159–Glu-166. Cys-161 serves as a coordination point for Zn(2+). Over Glu-188 to Trp-671 the chain is Extracellular. The Peptidase M12B domain maps to Arg-195–Pro-385. Asn-214 carries an N-linked (GlcNAc...) asparagine glycan. Intrachain disulfides connect Cys-305–Cys-380, Cys-344–Cys-366, and Cys-346–Cys-351. A Zn(2+)-binding site is contributed by His-329. Residue Glu-330 is part of the active site. 2 residues coordinate Zn(2+): His-333 and His-339. Residues Asn-365, Asn-391, Asn-464, Asn-506, Asn-531, and Asn-573 are each glycosylated (N-linked (GlcNAc...) asparagine). Residues Leu-392 to Asp-478 form the Disintegrin domain. A disulfide bridge connects residues Cys-450 and Cys-470. An EGF-like domain is found at Leu-616–Gln-649. Disulfide bonds link Cys-620–Cys-631 and Cys-639–Cys-648. A helical transmembrane segment spans residues Ile-672–Phe-692. Residues Tyr-693–Lys-697 are Cytoplasmic-facing.

The cofactor is Zn(2+). Expressed in sperm (at protein level). Expressed specifically in testis.

The protein localises to the membrane. Its function is as follows. Sperm surface membrane protein that may be involved in spermatogenesis and fertilization. The chain is Disintegrin and metalloproteinase domain-containing protein 26A from Mus musculus (Mouse).